Here is a 22-residue protein sequence, read N- to C-terminus: Phospholipase A2 (22 aa).

This sequence belongs to the phospholipase A2 family. Group II subfamily. Ca(2+) serves as cofactor. In terms of processing, seven disulfide bonds are present. Expressed by the venom gland.

The protein localises to the secreted. The catalysed reaction is a 1,2-diacyl-sn-glycero-3-phosphocholine + H2O = a 1-acyl-sn-glycero-3-phosphocholine + a fatty acid + H(+). Snake venom phospholipase A2 (PLA2) that inhibits neuromuscular transmission by blocking acetylcholine release from the nerve termini. PLA2 catalyzes the calcium-dependent hydrolysis of the 2-acyl groups in 3-sn-phosphoglycerides. This is Phospholipase A2 from Daboia siamensis (Eastern Russel's viper).